The chain runs to 684 residues: Multisite-specific tRNA:(cytosine-C(5))-methyltransferase (684 aa).

Residues M1 to K12 are compositionally biased toward basic residues. A disordered region spans residues M1–Q24. S-adenosyl-L-methionine contacts are provided by residues C173 to K179, D202, D229, and D257. Residue C310 is the Nucleophile of the active site. A Phosphothreonine modification is found at T426. S431 carries the phosphoserine modification. The segment at K650–N684 is disordered. Residues A655 to T665 show a composition bias toward basic and acidic residues. Positions E666–N684 are enriched in low complexity. A Phosphoserine modification is found at S667.

Belongs to the class I-like SAM-binding methyltransferase superfamily. RsmB/NOP family. TRM4 subfamily.

It is found in the nucleus. Its subcellular location is the nucleolus. The enzyme catalyses cytidine(34) in tRNA precursor + S-adenosyl-L-methionine = 5-methylcytidine(34) in tRNA precursor + S-adenosyl-L-homocysteine + H(+). It carries out the reaction cytidine(40) in tRNA precursor + S-adenosyl-L-methionine = 5-methylcytidine(40) in tRNA precursor + S-adenosyl-L-homocysteine + H(+). The catalysed reaction is cytidine(48) in tRNA + S-adenosyl-L-methionine = 5-methylcytidine(48) in tRNA + S-adenosyl-L-homocysteine + H(+). It catalyses the reaction cytidine(49) in tRNA + S-adenosyl-L-methionine = 5-methylcytidine(49) in tRNA + S-adenosyl-L-homocysteine + H(+). Methylates cytosine to m5C at several positions in different tRNAs and pre-tRNAs containing intron. Able to modify tRNAs at all four positions (34, 40, 48 and 49) at which m5C has been found in tRNAs. May be involved in ribosome biogenesis as its disruption leads to increased sensitivity to the antibiotic paromomycin. The chain is Multisite-specific tRNA:(cytosine-C(5))-methyltransferase (NCL1) from Saccharomyces cerevisiae (strain ATCC 204508 / S288c) (Baker's yeast).